The chain runs to 1475 residues: Mediator of RNA polymerase II transcription subunit 1.1 (1475 aa).

Disordered stretches follow at residues 579–600 (STIGRTRPQPRPKREPNQLTSM), 645–894 (GLAS…KMRE), and 908–1475 (PDVE…IDDE). The segment covering 655–666 (PVAAAAAAPGGP) has biased composition (low complexity). Polar residues predominate over residues 755–766 (QRSSSEQHNPNP). The segment covering 767-800 (HQMSQYQMQQYQQNQQFRMHQMQQQQQQQFQMQS) has biased composition (low complexity). Residues 810–819 (TDEDSDEECD) are compositionally biased toward acidic residues. The span at 829-838 (STSSRMSSVP) shows a compositional bias: low complexity. Residues 869 to 880 (TPSPLSAPPKPF) show a composition bias toward pro residues. Low complexity predominate over residues 915–929 (QQLSSSSSSSQAEAS). The span at 941-952 (PPKPSSSSAPPP) shows a compositional bias: pro residues. 2 stretches are compositionally biased toward low complexity: residues 969–989 (QQEQALQKQLQQQESVESELA) and 1037–1049 (QKPTDTSSQSTSS). 3 stretches are compositionally biased toward basic and acidic residues: residues 1052–1070 (PPKKEPADEQPEREKEKLI), 1080–1148 (VVDD…EKEP), and 1155–1180 (EKKDEKEKDRREPERKKGKSDGKEYS). Residues 1098–1135 (DRDRDEDREKVRDKEDKAQREKDKKEKERERRRQRDRD) adopt a coiled-coil conformation. Polar residues predominate over residues 1181-1193 (KASTTSLIPTLSL). Over residues 1199–1215 (PKKDTVEEEKKDVKEEA) the composition is skewed to basic and acidic residues. Positions 1242 to 1252 (APVAPAVQQQQ) are enriched in low complexity. Over residues 1281 to 1291 (PLQPPPPPQMT) the composition is skewed to pro residues. Residues 1308–1317 (PGSSRPSGNR) are compositionally biased toward polar residues. Composition is skewed to pro residues over residues 1320 to 1334 (PLPPPPPMIRGPPPD) and 1425 to 1440 (PPAPPPPQMIPLPKDP).

This sequence belongs to the Mediator complex subunit 1 family. In terms of assembly, component of the Mediator complex.

It localises to the nucleus. Functionally, component of the Mediator complex, a coactivator involved in the regulated transcription of nearly all RNA polymerase II-dependent genes. Mediator functions as a bridge to convey information from gene-specific regulatory proteins to the basal RNA polymerase II transcription machinery. Mediator is recruited to promoters by direct interactions with regulatory proteins and serves as a scaffold for the assembly of a functional preinitiation complex with RNA polymerase II and the general transcription factors. In Caenorhabditis elegans, this protein is Mediator of RNA polymerase II transcription subunit 1.1 (sop-3).